Here is a 259-residue protein sequence, read N- to C-terminus: Zinc import ATP-binding protein ZnuC (259 aa).

Positions 11 to 225 (IRLENIYVHR…PEYLAIFGGQ (215 aa)) constitute an ABC transporter domain. 43-50 (GPNGAGKS) contributes to the ATP binding site.

It belongs to the ABC transporter superfamily. Zinc importer (TC 3.A.1.15.5) family. As to quaternary structure, the complex is composed of two ATP-binding proteins (ZnuC), two transmembrane proteins (ZnuB) and a solute-binding protein (ZnuA).

The protein resides in the cell inner membrane. It catalyses the reaction Zn(2+)(out) + ATP(in) + H2O(in) = Zn(2+)(in) + ADP(in) + phosphate(in) + H(+)(in). In terms of biological role, part of the ABC transporter complex ZnuABC involved in zinc import. Responsible for energy coupling to the transport system. This is Zinc import ATP-binding protein ZnuC from Acinetobacter baylyi (strain ATCC 33305 / BD413 / ADP1).